The primary structure comprises 368 residues: Phospho-N-acetylmuramoyl-pentapeptide-transferase (368 aa).

The next 10 membrane-spanning stretches (helical) occupy residues T32 to D52, T79 to A99, L102 to Y122, L142 to G160, V176 to G196, G207 to A227, A244 to F264, I271 to A291, I296 to V316, and Q345 to L365.

This sequence belongs to the glycosyltransferase 4 family. MraY subfamily. The cofactor is Mg(2+).

Its subcellular location is the cell inner membrane. It carries out the reaction UDP-N-acetyl-alpha-D-muramoyl-L-alanyl-gamma-D-glutamyl-meso-2,6-diaminopimeloyl-D-alanyl-D-alanine + di-trans,octa-cis-undecaprenyl phosphate = di-trans,octa-cis-undecaprenyl diphospho-N-acetyl-alpha-D-muramoyl-L-alanyl-D-glutamyl-meso-2,6-diaminopimeloyl-D-alanyl-D-alanine + UMP. It participates in cell wall biogenesis; peptidoglycan biosynthesis. Catalyzes the initial step of the lipid cycle reactions in the biosynthesis of the cell wall peptidoglycan: transfers peptidoglycan precursor phospho-MurNAc-pentapeptide from UDP-MurNAc-pentapeptide onto the lipid carrier undecaprenyl phosphate, yielding undecaprenyl-pyrophosphoryl-MurNAc-pentapeptide, known as lipid I. This is Phospho-N-acetylmuramoyl-pentapeptide-transferase from Nitrobacter winogradskyi (strain ATCC 25391 / DSM 10237 / CIP 104748 / NCIMB 11846 / Nb-255).